Reading from the N-terminus, the 536-residue chain is Nucleosome assembly protein 1-like 3 (536 aa).

Disordered regions lie at residues 1–104 (MAEA…DKLP) and 160–338 (PTEE…KEDP). Residues 35–75 (SNSSSSTTSCGSTGSSSSSSSSSSSSSSSSSGSSGSSSNGS) are compositionally biased toward low complexity. The segment covering 77 to 95 (LHQKKRVPGPSRRAQRRPS) has biased composition (basic residues). Over residues 160-184 (PTEEECEWNSEEEFSGDEEMQDDTP) the composition is skewed to acidic residues. Basic and acidic residues-rich tracts occupy residues 199 to 220 (GKEN…PEAK) and 227 to 269 (PKET…KTDS). A compositionally biased stretch (polar residues) spans 287 to 300 (TQANAEYTDQPTED). A compositionally biased stretch (basic and acidic residues) spans 306 to 324 (PVREAQKRVPETRPEERVN).

The protein belongs to the nucleosome assembly protein (NAP) family.

The protein localises to the nucleus. The chain is Nucleosome assembly protein 1-like 3 (Nap1l3) from Rattus norvegicus (Rat).